The primary structure comprises 362 residues: Glutamate 5-kinase (362 aa).

Residue K3 participates in ATP binding. Positions 43, 128, and 140 each coordinate substrate. Residues 160 to 161 (TD) and 202 to 208 (TGGMRTK) each bind ATP. The PUA domain maps to 267–348 (AGAILVDAGA…RDIENVLGYS (82 aa)).

The protein belongs to the glutamate 5-kinase family.

Its subcellular location is the cytoplasm. The enzyme catalyses L-glutamate + ATP = L-glutamyl 5-phosphate + ADP. It participates in amino-acid biosynthesis; L-proline biosynthesis; L-glutamate 5-semialdehyde from L-glutamate: step 1/2. Catalyzes the transfer of a phosphate group to glutamate to form L-glutamate 5-phosphate. The polypeptide is Glutamate 5-kinase (Xanthomonas oryzae pv. oryzae (strain MAFF 311018)).